Here is a 358-residue protein sequence, read N- to C-terminus: Chondroadherin (358 aa).

The N-terminal stretch at Met1 to Ala20 is a signal peptide. Positions Ala21–Glu50 constitute an LRRNT domain. An intrachain disulfide couples Cys22 to Cys37. LRR repeat units lie at residues Thr51 to Thr72, Asn75 to Gly96, Gln99 to Asp120, Glu123 to Pro144, Asn147 to Gly168, Asp171 to Asp192, Asn195 to Lys216, Val219 to Ser240, Tyr244 to Gly265, and Thr268 to Asp289. Residue Ser143 is glycosylated (O-linked (GalNAc...) serine). An LRRCT domain is found at Asn299–Ser347. 2 disulfides stabilise this stretch: Cys303–Cys345 and Cys305–Cys325. Residues Pro321–His358 are disordered. Positions Pro348–His358 are enriched in basic residues.

The protein belongs to the small leucine-rich proteoglycan (SLRP) family. SLRP class IV subfamily. As to quaternary structure, mostly monomeric. As to expression, present in femoral head and rib cartilage, as well as in tendon. Detected in bone marrow.

The protein localises to the secreted. It is found in the extracellular space. The protein resides in the extracellular matrix. Promotes attachment of chondrocytes, fibroblasts, and osteoblasts. This binding is mediated (at least for chondrocytes and fibroblasts) by the integrin alpha(2)beta(1). May play an important role in the regulation of chondrocyte growth and proliferation. In Rattus norvegicus (Rat), this protein is Chondroadherin (Chad).